The chain runs to 128 residues: uncharacterized protein (128 aa).

The tract at residues 1-26 (MNSATSETTTNTGAAETTTSTGAAET) is disordered. The helical transmembrane segment at 105 to 127 (IANGLLTNNGISVFISTVLLAIV) threads the bilayer.

The protein belongs to the flocculin family.

Its subcellular location is the membrane. This is an uncharacterized protein from Saccharomyces cerevisiae (strain ATCC 204508 / S288c) (Baker's yeast).